We begin with the raw amino-acid sequence, 749 residues long: Metabotropic glutamate receptor-like protein M (749 aa).

A signal peptide spans 1–22; it reads MIKLILSLIFLIICCNINPSES. The Extracellular segment spans residues 23-385; sequence FKLITLTTGP…KIEFSSSVQK (363 aa). N-linked (GlcNAc...) asparagine glycosylation is found at N67, N164, N257, N271, and N345. Residues 386-406 form a helical membrane-spanning segment; it reads GFSIVSGCLIAFVILMMVGIV. Topologically, residues 407–419 are cytoplasmic; sequence YYKDTPSIRSASP. A helical membrane pass occupies residues 420-440; sequence IFLNFSLIGGIIIYIGIIIWV. Topologically, residues 441 to 456 are extracellular; that stretch reads GPISTHQCNARFWLVT. The chain crosses the membrane as a helical span at residues 457 to 477; the sequence is LGFSTLIGSLVVKNFRIWLIF. Residues 478 to 492 are Cytoplasmic-facing; that stretch reads DNPELKAIKITNYQL. Residues 493–513 traverse the membrane as a helical segment; it reads FPWVGLCLVINIVLMAILTSV. The Extracellular segment spans residues 514–544; sequence GDLKAIEAQGIDSLGKYEYMTVCKMNSAGAS. The helical transmembrane segment at 545–565 threads the bilayer; sequence TLYSILAYFAALLLVGVFVSW. The Cytoplasmic portion of the chain corresponds to 566 to 579; it reads KIRIVDIEEFNESK. A helical transmembrane segment spans residues 580-600; it reads AIANTLYAVSFCLFVIVPLMI. Topologically, residues 601-609 are extracellular; sequence SPQEKQSET. Residues 610 to 630 traverse the membrane as a helical segment; sequence IILCVAGLFITTAALLIVFIP. Over 631–749 the chain is Cytoplasmic; that stretch reads KFWRVFIYGK…EEPVKTESQE (119 aa). Residues 658–749 form a disordered region; the sequence is ARAESLSKNS…EEPVKTESQE (92 aa). A compositionally biased stretch (polar residues) spans 698-716; that stretch reads SSLSEPNKPTKNNDGNVNV. Positions 725 to 740 are enriched in acidic residues; that stretch reads FTDDTISEFDENEVNE.

In the N-terminal section; belongs to the BMP lipoprotein family. This sequence in the C-terminal section; belongs to the G-protein coupled receptor 3 family. GABA-B receptor subfamily.

It is found in the membrane. The protein is Metabotropic glutamate receptor-like protein M (grlM) of Dictyostelium discoideum (Social amoeba).